The sequence spans 346 residues: Golgi-associated RAB2 interactor protein 2 (346 aa).

Positions 275–346 are disordered; that stretch reads TPVESEANTS…EKHVRQPKDF (72 aa). Basic and acidic residues-rich tracts occupy residues 283 to 297 and 334 to 346; these read TSKE…EKTP and KLVE…PKDF.

It belongs to the GARIN family. In terms of assembly, interacts with CALM1.

The protein localises to the cell projection. It is found in the cilium. Its subcellular location is the flagellum. In terms of biological role, seems to play a role in sperm motility. The chain is Golgi-associated RAB2 interactor protein 2 (GARIN2) from Macaca fascicularis (Crab-eating macaque).